A 386-amino-acid polypeptide reads, in one-letter code: MATATVLEKANIGVFTNTKHDLWVADAKPTLEEVKNGQGLQPGEVTIEVRSTGICGSDVHFWHAGCIGPMIVTGDHILGHESAGQVVAVAPDVTSLKPGDRVAVEPNIICNACEPCLTGRYNGCENVQFLSTPPVDGLLRRYVNHPAIWCHKIGDMSYEDGALLEPLSVSLAGIERSGLRLGDPCLVTGAGPIGLITLLSARAAGASPIVITDIDEGRLEFAKSLVPDVRTYKVQIGLSAEQNAEGIINVFNDGQGSGPGALRPRIAMECTGVESSVASAIWSVKFGGKVFVIGVGKNEMTVPFMRLSTWEIDLQYQYRYCNTWPRAIRLVRNGVIDLKKLVTHRFLLEDAIKAFETAANPKTGAIKVQIMSSEDDVKAASAGQKI.

Positions 55, 80, 81, 110, 113, 116, 124, and 165 each coordinate Zn(2+). Residues 192-193 (PI), D213, R218, I293, and 317-319 (QYR) each bind NAD(+).

It belongs to the zinc-containing alcohol dehydrogenase family. In terms of assembly, homotetramer. Requires Zn(2+) as cofactor.

The enzyme catalyses L-arabinitol + NAD(+) = L-xylulose + NADH + H(+). It functions in the pathway carbohydrate degradation; L-arabinose degradation via L-arabinitol; D-xylulose 5-phosphate from L-arabinose (fungal route): step 2/5. In terms of biological role, catalyzes the NAD-dependent oxidation of L-arabinitol to L-xylulose in the fungal L-arabinose catabolic pathway. L-arabinose catabolism is important for using plant material as a carbon source. Not active with NADP as cosubstrate. The sequence is that of L-arabinitol 4-dehydrogenase (ladA) from Aspergillus niger (strain ATCC MYA-4892 / CBS 513.88 / FGSC A1513).